The following is a 605-amino-acid chain: Class II receptor tyrosine kinase (605 aa).

In terms of domain architecture, Ig-like C2-type spans 1-67 (MWSSPGRNLE…DGESASFRVD (67 aa)). Residues 1 to 84 (MWSSPGRNLE…GSNSGVIAGV (84 aa)) are Extracellular-facing. N26, N44, and N72 each carry an N-linked (GlcNAc...) asparagine glycan. A helical transmembrane segment spans residues 85 to 105 (LITLLLLIALIIILICVFWVV). The Cytoplasmic portion of the chain corresponds to 106-605 (WRYRRRGKFD…GRPRGVAGCV (500 aa)). Positions 209 to 230 (EELSPIQEKPTRRNTGLSTYSQ) are disordered. Positions 221–230 (RNTGLSTYSQ) are enriched in polar residues. A Protein kinase domain is found at 346–605 (IREVKQIGVG…GRPRGVAGCV (260 aa)). ATP-binding positions include 352-360 (IGVGQFGAV) and K393. Residue D496 is the Proton acceptor of the active site. Y527 carries the phosphotyrosine; by autocatalysis modification.

Belongs to the protein kinase superfamily. Tyr protein kinase family. Insulin receptor subfamily. In terms of processing, phosphorylated.

Its subcellular location is the cell membrane. The catalysed reaction is L-tyrosyl-[protein] + ATP = O-phospho-L-tyrosyl-[protein] + ADP + H(+). This chain is Class II receptor tyrosine kinase (TK), found in Geodia cydonium (Sponge).